A 367-amino-acid chain; its full sequence is tRNA/tmRNA (uracil-C(5))-methyltransferase (367 aa).

5 residues coordinate S-adenosyl-L-methionine: glutamine 190, tyrosine 218, asparagine 223, glutamate 239, and aspartate 299. Cysteine 324 (nucleophile) is an active-site residue. The Proton acceptor role is filled by glutamate 358.

This sequence belongs to the class I-like SAM-binding methyltransferase superfamily. RNA M5U methyltransferase family. TrmA subfamily.

The catalysed reaction is uridine(54) in tRNA + S-adenosyl-L-methionine = 5-methyluridine(54) in tRNA + S-adenosyl-L-homocysteine + H(+). The enzyme catalyses uridine(341) in tmRNA + S-adenosyl-L-methionine = 5-methyluridine(341) in tmRNA + S-adenosyl-L-homocysteine + H(+). Functionally, dual-specificity methyltransferase that catalyzes the formation of 5-methyluridine at position 54 (m5U54) in all tRNAs, and that of position 341 (m5U341) in tmRNA (transfer-mRNA). The sequence is that of tRNA/tmRNA (uracil-C(5))-methyltransferase from Dickeya chrysanthemi (strain Ech1591) (Dickeya zeae (strain Ech1591)).